Here is a 487-residue protein sequence, read N- to C-terminus: Malonate-semialdehyde dehydrogenase (487 aa).

NAD(+)-binding residues include A150, F152, K176, E179, R180, S229, and T251. C284 functions as the Nucleophile in the catalytic mechanism. E382 is an NAD(+) binding site.

The protein belongs to the aldehyde dehydrogenase family. IolA subfamily. As to quaternary structure, homotetramer.

It carries out the reaction 3-oxopropanoate + NAD(+) + CoA + H2O = hydrogencarbonate + acetyl-CoA + NADH + H(+). The enzyme catalyses 2-methyl-3-oxopropanoate + NAD(+) + CoA + H2O = propanoyl-CoA + hydrogencarbonate + NADH + H(+). Its pathway is polyol metabolism; myo-inositol degradation into acetyl-CoA; acetyl-CoA from myo-inositol: step 7/7. In terms of biological role, catalyzes the oxidation of malonate semialdehyde (MSA) and methylmalonate semialdehyde (MMSA) into acetyl-CoA and propanoyl-CoA, respectively. Is involved in a myo-inositol catabolic pathway. Bicarbonate, and not CO2, is the end-product of the enzymatic reaction. In Bacillus subtilis (strain 168), this protein is Malonate-semialdehyde dehydrogenase.